Consider the following 209-residue polypeptide: Small ribosomal subunit protein uS3 (209 aa).

The 70-residue stretch at 38–107 folds into the KH type-2 domain; sequence IRKFIKNKYY…RVVINIEEIK (70 aa).

This sequence belongs to the universal ribosomal protein uS3 family. As to quaternary structure, part of the 30S ribosomal subunit. Forms a tight complex with proteins S10 and S14.

Its function is as follows. Binds the lower part of the 30S subunit head. Binds mRNA in the 70S ribosome, positioning it for translation. The polypeptide is Small ribosomal subunit protein uS3 (Thermotoga sp. (strain RQ2)).